A 633-amino-acid chain; its full sequence is DNA mismatch repair protein MutL (633 aa).

Disordered regions lie at residues 336-364 (VRPD…GEFG) and 384-405 (GWSG…TRPE). A compositionally biased stretch (low complexity) spans 388–401 (GASSSGASSGYSAY).

The protein belongs to the DNA mismatch repair MutL/HexB family.

Its function is as follows. This protein is involved in the repair of mismatches in DNA. It is required for dam-dependent methyl-directed DNA mismatch repair. May act as a 'molecular matchmaker', a protein that promotes the formation of a stable complex between two or more DNA-binding proteins in an ATP-dependent manner without itself being part of a final effector complex. The protein is DNA mismatch repair protein MutL of Pseudomonas paraeruginosa (strain DSM 24068 / PA7) (Pseudomonas aeruginosa (strain PA7)).